The primary structure comprises 695 residues: DNA ligase (695 aa).

NAD(+)-binding positions include 36-40 (DADYD), 85-86 (SL), and Glu123. The active-site N6-AMP-lysine intermediate is Lys125. Positions 146, 182, 318, and 342 each coordinate NAD(+). 4 residues coordinate Zn(2+): Cys436, Cys439, Cys454, and Cys460. In terms of domain architecture, BRCT spans 617 to 695 (LQSGDLAGKT…EDGLKALLSQ (79 aa)).

It belongs to the NAD-dependent DNA ligase family. LigA subfamily. It depends on Mg(2+) as a cofactor. Mn(2+) serves as cofactor.

The catalysed reaction is NAD(+) + (deoxyribonucleotide)n-3'-hydroxyl + 5'-phospho-(deoxyribonucleotide)m = (deoxyribonucleotide)n+m + AMP + beta-nicotinamide D-nucleotide.. Its function is as follows. DNA ligase that catalyzes the formation of phosphodiester linkages between 5'-phosphoryl and 3'-hydroxyl groups in double-stranded DNA using NAD as a coenzyme and as the energy source for the reaction. It is essential for DNA replication and repair of damaged DNA. The chain is DNA ligase from Bordetella avium (strain 197N).